The following is a 287-amino-acid chain: Acetylglutamate kinase (287 aa).

Substrate is bound by residues 64–65, Arg86, and Asn181; that span reads GG.

This sequence belongs to the acetylglutamate kinase family. ArgB subfamily.

The protein localises to the cytoplasm. The enzyme catalyses N-acetyl-L-glutamate + ATP = N-acetyl-L-glutamyl 5-phosphate + ADP. The protein operates within amino-acid biosynthesis; L-arginine biosynthesis; N(2)-acetyl-L-ornithine from L-glutamate: step 2/4. In terms of biological role, catalyzes the ATP-dependent phosphorylation of N-acetyl-L-glutamate. In Desulforamulus reducens (strain ATCC BAA-1160 / DSM 100696 / MI-1) (Desulfotomaculum reducens), this protein is Acetylglutamate kinase.